The chain runs to 163 residues: Glutathione peroxidase-like peroxiredoxin HYR1 (163 aa).

The active-site Cysteine sulfenic acid (-SOH) intermediate is the Cys36. Cysteines 36 and 82 form a disulfide.

Belongs to the glutathione peroxidase family. As to quaternary structure, interacts with YAP1 and probably YBP1.

The protein resides in the cytoplasm. The protein localises to the mitochondrion intermembrane space. It localises to the peroxisome matrix. The enzyme catalyses a hydroperoxide + [thioredoxin]-dithiol = an alcohol + [thioredoxin]-disulfide + H2O. Functionally, involved in oxidative stress response and redox homeostasis. Functions as a sensor and transducer of hydroperoxide stress. In response to hydroperoxide stress it oxidizes (activates) the transcription activator YAP1, which is involved in transcription activation of genes of the oxidative stress response pathway. May also play a direct role in hydroperoxide scavenging, being the most active of three closely related S.cerevisiae peroxiredoxins (GPX1, GPX2, and HYR1/GPX3) with respect to peroxide and lipid hydroperoxide reduction. The three enzymes are not required for the glutaredoxin-mediated antioxidant function. In the presence of peroxides, HYR1/GPX3 is directly oxidized at Cys-36 to form a cysteine sulfenic acid (-SOH). Cys-36-SOH then forms either an intramolecular disulfide bond (Cys-36 with Cys-82) or a transient, intermolecular disulfide bond with 'Cys-598' of YAP1, which is further resolved into a YAP1 intramolecular disulfide bond ('Cys-303' with 'Cys-598'), which causes its nuclear accumulation and activation, and a reduced Cys-36 in HYR1/GPX3. This is Glutathione peroxidase-like peroxiredoxin HYR1 from Saccharomyces cerevisiae (strain ATCC 204508 / S288c) (Baker's yeast).